The sequence spans 252 residues: Membrane protein insertase YidC (252 aa).

Residues 1-19 form the signal peptide; sequence MKKVLWIIIIILMVGALAG. Residue C20 is the site of N-palmitoyl cysteine attachment. Residue C20 is the site of S-diacylglycerol cysteine attachment. 6 helical membrane-spanning segments follow: residues 34–54, 58–78, 131–151, 162–182, 201–221, and 223–243; these read IWNHFFVYPLSWVLISVADLL, FGLSIIVVTIGIRLFLLPLMI, MAGCLPLFIQLPVMMAFYFAI, FLWFDLGSPDPLYILPVVAGI, VIIYIMPVMIVVAGVTLPSAL, and LYWVVGNLFMIIQTYFTVVRF.

It belongs to the OXA1/ALB3/YidC family. Type 2 subfamily.

The protein localises to the cell membrane. Its function is as follows. Required for the insertion and/or proper folding and/or complex formation of integral membrane proteins into the membrane. Involved in integration of membrane proteins that insert both dependently and independently of the Sec translocase complex, as well as at least some lipoproteins. The sequence is that of Membrane protein insertase YidC from Alkalihalophilus pseudofirmus (strain ATCC BAA-2126 / JCM 17055 / OF4) (Bacillus pseudofirmus).